A 485-amino-acid polypeptide reads, in one-letter code: Aspartyl/glutamyl-tRNA(Asn/Gln) amidotransferase subunit B (485 aa).

It belongs to the GatB/GatE family. GatB subfamily. As to quaternary structure, heterotrimer of A, B and C subunits.

The enzyme catalyses L-glutamyl-tRNA(Gln) + L-glutamine + ATP + H2O = L-glutaminyl-tRNA(Gln) + L-glutamate + ADP + phosphate + H(+). It carries out the reaction L-aspartyl-tRNA(Asn) + L-glutamine + ATP + H2O = L-asparaginyl-tRNA(Asn) + L-glutamate + ADP + phosphate + 2 H(+). Its function is as follows. Allows the formation of correctly charged Asn-tRNA(Asn) or Gln-tRNA(Gln) through the transamidation of misacylated Asp-tRNA(Asn) or Glu-tRNA(Gln) in organisms which lack either or both of asparaginyl-tRNA or glutaminyl-tRNA synthetases. The reaction takes place in the presence of glutamine and ATP through an activated phospho-Asp-tRNA(Asn) or phospho-Glu-tRNA(Gln). This is Aspartyl/glutamyl-tRNA(Asn/Gln) amidotransferase subunit B from Opitutus terrae (strain DSM 11246 / JCM 15787 / PB90-1).